Reading from the N-terminus, the 1105-residue chain is Serine/threonine-protein kinase 4 homolog B (1105 aa).

The Protein kinase domain maps to 23-274 (FDLIECLGRG…AKDLLKHSFF (252 aa)). ATP contacts are provided by residues 29-37 (LGRGSFGSV) and lysine 52. The active-site Proton acceptor is the aspartate 142. Disordered stretches follow at residues 348 to 396 (STQI…TKNN), 411 to 482 (SSSA…RQPA), and 495 to 541 (PSFG…SLPL). 2 stretches are compositionally biased toward low complexity: residues 358-396 (QAQQ…TKNN) and 411-437 (SSSA…TTTN). Residues 438-458 (DYHTGNGRTSSSSPQFGLQHQ) show a composition bias toward polar residues. Low complexity-rich tracts occupy residues 459 to 473 (NSSN…TVPS) and 513 to 541 (PIGS…SLPL). Residues 516–1105 (SPITKRPTPT…SEFDLDFYNN (590 aa)) are calpain-like cysteine protease-like. 4 domain III regions span residues 641–668 (EVSA…EGSF), 791–830 (VHTQ…QGSI), 836–972 (SEQI…NVIQ), and 1076–1103 (VVIP…LDFY).

It in the N-terminal section; belongs to the protein kinase superfamily. STE Ser/Thr protein kinase family. STE20 subfamily. In the C-terminal section; belongs to the peptidase C2 family. Requires Mn(2+) as cofactor.

The enzyme catalyses L-seryl-[protein] + ATP = O-phospho-L-seryl-[protein] + ADP + H(+). It carries out the reaction L-threonyl-[protein] + ATP = O-phospho-L-threonyl-[protein] + ADP + H(+). Functionally, probable serine/threonine-protein kinase. The sequence is that of Serine/threonine-protein kinase 4 homolog B (krsB) from Dictyostelium discoideum (Social amoeba).